Reading from the N-terminus, the 159-residue chain is RxLR effector protein 24 (159 aa).

A signal peptide spans 1 to 18; that stretch reads MRFLVWVFFVGLVTFVSG. The RxLR-dEER signature appears at 58–82; the sequence is RFLRSNANQDLTTANDDSDVKEEER. Residues 109-159 form an RABA-binding domain region; it reads EKAFQHMMKQGETPTSLAKRLEIGGAAELRYEKVYEKYTAWWINYHTVAGT.

This sequence belongs to the RxLR effector family. Interacts with potato RABA GTPases including RABA1a, RABA2a and RABA4a.

The protein resides in the secreted. It is found in the host cell membrane. It localises to the host endomembrane system. Its function is as follows. Effector protein that contributes to pathogen virulence. Targets members of the RABA GTPases subfamily to inhibit vesicular secretion, leading to an accumulation of secretory proteins in the endoplasmic reticulum. This Phytophthora infestans (strain T30-4) (Potato late blight agent) protein is RxLR effector protein 24.